Consider the following 195-residue polypeptide: Thymidine kinase (195 aa).

Residues 15–22 (GSMFSGKS) and 88–91 (DEVQ) contribute to the ATP site. Glutamate 89 acts as the Proton acceptor in catalysis. Residues cysteine 145, cysteine 148, cysteine 183, and cysteine 186 each contribute to the Zn(2+) site.

Belongs to the thymidine kinase family. Homotetramer.

It is found in the cytoplasm. It carries out the reaction thymidine + ATP = dTMP + ADP + H(+). The polypeptide is Thymidine kinase (Bacillus cereus (strain 03BB102)).